The following is a 432-amino-acid chain: Putative D-alanyl-D-alanine carboxypeptidase (432 aa).

Residues 7 to 25 (ATVLLTFSLSAFAVEYPVL) traverse the membrane as a helical; Signal-anchor segment.

This sequence belongs to the peptidase S12 family. YfeW subfamily.

It localises to the cell inner membrane. The catalysed reaction is Preferential cleavage: (Ac)2-L-Lys-D-Ala-|-D-Ala. Also transpeptidation of peptidyl-alanyl moieties that are N-acyl substituents of D-alanine.. This chain is Putative D-alanyl-D-alanine carboxypeptidase, found in Salmonella enteritidis PT4 (strain P125109).